A 470-amino-acid polypeptide reads, in one-letter code: MAKTIIEKIWESHTVVDESGKPNLLYVDLHMVHEVTSPQAFEGLRLAGRTVRRPDKTFATMDHNVPTVNRYDIRDQIARTQMETLAANCKQFGIEMVDLDHPENGIVHVIGPELGLTQPGHVIVCGDSHTSTHGAFGAIAFGIGTSEVEHVLATQTIWQSKPKTLEVHISGRLNEGISAKDVILAIIAKFGVDIGTGSIIEFTGEAIRGMTMEERMTICNMSIEAGAKAGLISPDQVTFDYLQGRANVPKGEAYDEIVEKWAQLATDPGATYDRSVTIDAAEIEPMVTWGTNPGQGAGISKAVPRLDDAKSEVERRAISQALDYMDIKPGTPLSEIEIQHVFIGSCTNSRLSDLRAAAAVINGRKVAPGVRALIVPGSQRVKKRAEEEGLDQVFKEAGFEWRDSGCSMCLSMNPDVVPEGERCASTSNRNFEGRQGKGARTHLVSPAMAAAAAIAGRFVDVRKMVKAGEC.

The [4Fe-4S] cluster site is built by Cys346, Cys406, and Cys409.

This sequence belongs to the aconitase/IPM isomerase family. LeuC type 1 subfamily. In terms of assembly, heterodimer of LeuC and LeuD. Requires [4Fe-4S] cluster as cofactor.

The catalysed reaction is (2R,3S)-3-isopropylmalate = (2S)-2-isopropylmalate. The protein operates within amino-acid biosynthesis; L-leucine biosynthesis; L-leucine from 3-methyl-2-oxobutanoate: step 2/4. Its function is as follows. Catalyzes the isomerization between 2-isopropylmalate and 3-isopropylmalate, via the formation of 2-isopropylmaleate. The chain is 3-isopropylmalate dehydratase large subunit from Shouchella clausii (strain KSM-K16) (Alkalihalobacillus clausii).